Reading from the N-terminus, the 513-residue chain is Maturase K (513 aa).

The protein belongs to the intron maturase 2 family. MatK subfamily.

The protein resides in the plastid. It localises to the chloroplast. Its function is as follows. Usually encoded in the trnK tRNA gene intron. Probably assists in splicing its own and other chloroplast group II introns. The protein is Maturase K of Sporobolus indicus (Smut grass).